We begin with the raw amino-acid sequence, 332 residues long: Probable electron transfer flavoprotein subunit alpha, mitochondrial (332 aa).

Position 275 to 303 (275 to 303 (LYIAIGISGAIQHLAGMKDSKVIVAINKD)) interacts with FAD.

The protein belongs to the ETF alpha-subunit/FixB family. Heterodimer of an alpha and a beta subunit. FAD is required as a cofactor.

It is found in the mitochondrion matrix. In terms of biological role, the electron transfer flavoprotein serves as a specific electron acceptor for several dehydrogenases, including five acyl-CoA dehydrogenases, glutaryl-CoA and sarcosine dehydrogenase. It transfers the electrons to the main mitochondrial respiratory chain via ETF-ubiquinone oxidoreductase (ETF dehydrogenase). This is Probable electron transfer flavoprotein subunit alpha, mitochondrial from Caenorhabditis elegans.